Reading from the N-terminus, the 72-residue chain is Translation initiation factor IF-1 1 (72 aa).

Positions 1 to 72 (MSKEDVIQMQ…TKGRIVFRAK (72 aa)) constitute an S1-like domain.

The protein belongs to the IF-1 family. Component of the 30S ribosomal translation pre-initiation complex which assembles on the 30S ribosome in the order IF-2 and IF-3, IF-1 and N-formylmethionyl-tRNA(fMet); mRNA recruitment can occur at any time during PIC assembly.

The protein resides in the cytoplasm. In terms of biological role, one of the essential components for the initiation of protein synthesis. Stabilizes the binding of IF-2 and IF-3 on the 30S subunit to which N-formylmethionyl-tRNA(fMet) subsequently binds. Helps modulate mRNA selection, yielding the 30S pre-initiation complex (PIC). Upon addition of the 50S ribosomal subunit IF-1, IF-2 and IF-3 are released leaving the mature 70S translation initiation complex. This is Translation initiation factor IF-1 1 from Thiobacillus denitrificans (strain ATCC 25259 / T1).